A 327-amino-acid chain; its full sequence is GMP reductase (327 aa).

The active-site Thioimidate intermediate is Cys176. An NADP(+)-binding site is contributed by 205–228 (IIADGGIRTHGDIAKSIRFGASMV).

This sequence belongs to the IMPDH/GMPR family. GuaC type 2 subfamily.

The catalysed reaction is IMP + NH4(+) + NADP(+) = GMP + NADPH + 2 H(+). Its function is as follows. Catalyzes the irreversible NADPH-dependent deamination of GMP to IMP. It functions in the conversion of nucleobase, nucleoside and nucleotide derivatives of G to A nucleotides, and in maintaining the intracellular balance of A and G nucleotides. This chain is GMP reductase, found in Streptococcus pyogenes serotype M1.